Consider the following 342-residue polypeptide: Succinylglutamate desuccinylase (342 aa).

Zn(2+)-binding residues include His63, Glu66, and His155. Glu219 is an active-site residue.

It belongs to the AspA/AstE family. Succinylglutamate desuccinylase subfamily. Requires Zn(2+) as cofactor.

It carries out the reaction N-succinyl-L-glutamate + H2O = L-glutamate + succinate. It participates in amino-acid degradation; L-arginine degradation via AST pathway; L-glutamate and succinate from L-arginine: step 5/5. Its function is as follows. Transforms N(2)-succinylglutamate into succinate and glutamate. The sequence is that of Succinylglutamate desuccinylase from Vibrio vulnificus (strain YJ016).